The following is a 396-amino-acid chain: Dimethyladenosine transferase 2, mitochondrial (396 aa).

The transit peptide at 1-43 directs the protein to the mitochondrion; that stretch reads MRGPAMRLPPRIALSALARGPSCILGSGAATRKDWQTRNRRGF. The segment at 43–71 is disordered; that stretch reads FSDFNIEPLPDSDLEESSPWTSRNRSEPT. Residues isoleucine 74, glutamate 123, and aspartate 149 each contribute to the S-adenosyl-L-methionine site. The DNA-binding stretch occupies residues 328–329; it reads KR.

This sequence belongs to the class I-like SAM-binding methyltransferase superfamily. rRNA adenine N(6)-methyltransferase family. KsgA subfamily. In terms of assembly, homodimer. Component of the mitochondrial transcription initiation complex, composed at least of TFB2M, TFAM and POLRMT. In this complex TFAM recruits POLRMT to the promoter whereas TFB2M induces structural changes in POLRMT to enable promoter opening and trapping of the DNA non-template strand. Interacts with mitochondrial RNA polymerase POLRMT. Interacts with TFAM. In terms of tissue distribution, ubiquitously expressed.

Its subcellular location is the mitochondrion. It catalyses the reaction adenosine in rRNA + S-adenosyl-L-methionine = N(6)-methyladenosine in rRNA + S-adenosyl-L-homocysteine + H(+). Its function is as follows. S-adenosyl-L-methionine-dependent rRNA methyltransferase which may methylate two specific adjacent adenosines in the loop of a conserved hairpin near the 3'-end of 12S mitochondrial rRNA. Component of the mitochondrial transcription initiation complex, composed at least of TFB2M, TFAM and POLRMT that is required for basal transcription of mitochondrial DNA. In this complex, TFAM recruits POLRMT to a specific promoter whereas TFB2M induces structural changes in POLRMT to enable promoter opening and trapping of the DNA non-template strand. Stimulates transcription independently of the methyltransferase activity. The sequence is that of Dimethyladenosine transferase 2, mitochondrial from Mus musculus (Mouse).